The primary structure comprises 500 residues: ADP,ATP carrier protein 5 (500 aa).

11 consecutive transmembrane segments (helical) span residues 26 to 46 (LGKF…QNIL), 62 to 82 (IAGF…VIIY), 94 to 114 (IFYY…FVIY), 149 to 169 (YIVY…LLFW), 184 to 204 (FYTL…FLMM), 224 to 244 (ITLV…CCLL), 287 to 307 (LWLL…VEAV), 328 to 348 (LYIL…NNVM), 357 to 377 (AVIS…LIVF), 381 to 401 (ILSL…VSIG), and 469 to 489 (SISP…IYAV).

It belongs to the ADP/ATP translocase tlc family.

The protein localises to the cell membrane. Provides the rickettsial cell with host ATP in exchange for rickettsial ADP. This is an obligate exchange system. This energy acquiring activity is an important component of rickettsial parasitism. This is ADP,ATP carrier protein 5 (tlcE) from Rickettsia typhi (strain ATCC VR-144 / Wilmington).